The primary structure comprises 412 residues: Protein Mb3436c (412 aa).

Position 227 is an N6-(pyridoxal phosphate)lysine (lysine 227).

The protein belongs to the DegT/DnrJ/EryC1 family.

This Mycobacterium bovis (strain ATCC BAA-935 / AF2122/97) protein is Protein Mb3436c.